A 253-amino-acid chain; its full sequence is uncharacterized protein (253 aa).

The BPL/LPL catalytic domain maps to 30–236; that stretch reads AQGRQVAQLW…AVDDDAALMA (207 aa).

This is an uncharacterized protein from Cupriavidus necator (strain ATCC 17699 / DSM 428 / KCTC 22496 / NCIMB 10442 / H16 / Stanier 337) (Ralstonia eutropha).